Consider the following 393-residue polypeptide: S-adenosylmethionine synthase 2 (393 aa).

Glutamate 9 contacts Mg(2+). Histidine 15 is a binding site for ATP. Residue glutamate 43 coordinates K(+). Positions 56 and 99 each coordinate L-methionine. Residues 167 to 169 (DGK), 235 to 238 (SGRF), aspartate 246, 252 to 253 (RK), alanine 269, lysine 273, and lysine 277 contribute to the ATP site. Aspartate 246 contacts L-methionine. Lysine 277 contributes to the L-methionine binding site.

This sequence belongs to the AdoMet synthase family. Homotetramer. Mn(2+) serves as cofactor. Mg(2+) is required as a cofactor. The cofactor is Co(2+). It depends on K(+) as a cofactor. Requires NH4(+) as cofactor. Mostly expressed in roots, and, to a lower extent, in hypocotyls and cotyledons.

The protein resides in the cytoplasm. The catalysed reaction is L-methionine + ATP + H2O = S-adenosyl-L-methionine + phosphate + diphosphate. It functions in the pathway amino-acid biosynthesis; S-adenosyl-L-methionine biosynthesis; S-adenosyl-L-methionine from L-methionine: step 1/1. Its activity is regulated as follows. Inhibited by products of SAMS reaction (SAM, Pi, PPi), substrate analogs (cycloleucine and ethionine), and alternative nucleotides (GTP, CTP and ADP). Strongly repressed by PPPi. Its function is as follows. Catalyzes the formation of S-adenosylmethionine from methionine and ATP. The reaction comprises two steps that are both catalyzed by the same enzyme: formation of S-adenosylmethionine (AdoMet) and triphosphate, and subsequent hydrolysis of the triphosphate. This Catharanthus roseus (Madagascar periwinkle) protein is S-adenosylmethionine synthase 2 (SAMS2).